Here is a 491-residue protein sequence, read N- to C-terminus: Probable malate:quinone oxidoreductase (491 aa).

Belongs to the MQO family. Requires FAD as cofactor.

The catalysed reaction is (S)-malate + a quinone = a quinol + oxaloacetate. It functions in the pathway carbohydrate metabolism; tricarboxylic acid cycle; oxaloacetate from (S)-malate (quinone route): step 1/1. This Leifsonia xyli subsp. xyli (strain CTCB07) protein is Probable malate:quinone oxidoreductase.